A 73-amino-acid chain; its full sequence is Protein SlyX homolog (73 aa).

This sequence belongs to the SlyX family.

The chain is Protein SlyX homolog from Actinobacillus pleuropneumoniae serotype 5b (strain L20).